The following is a 620-amino-acid chain: MAU2 chromatid cohesion factor homolog (620 aa).

TPR repeat units follow at residues 452–485 and 492–525; these read GGFY…ANAE and SCSL…ASKI.

This sequence belongs to the SCC4/mau-2 family. Interacts with Nipped-B to form the cohesin loading complex.

The protein resides in the nucleus. It is found in the nucleoplasm. In terms of biological role, required for association of the cohesin complex with chromatin during interphase. Plays a role in sister chromatid cohesion and normal progression through prometaphase. The protein is MAU2 chromatid cohesion factor homolog of Drosophila persimilis (Fruit fly).